A 507-amino-acid polypeptide reads, in one-letter code: Arabinose import ATP-binding protein AraG (507 aa).

2 consecutive ABC transporter domains span residues 14–249 (LRFN…MVGR) and 249–505 (RDIQ…LPRT). 46–53 (GENGAGKS) is an ATP binding site.

The protein belongs to the ABC transporter superfamily. Arabinose importer (TC 3.A.1.2.2) family. In terms of assembly, the complex is composed of two ATP-binding proteins (AraG), two transmembrane proteins (AraH) and a solute-binding protein (AraF).

It localises to the cell inner membrane. It carries out the reaction L-arabinose(out) + ATP + H2O = L-arabinose(in) + ADP + phosphate + H(+). In terms of biological role, part of the ABC transporter complex AraFGH involved in arabinose import. Responsible for energy coupling to the transport system. The sequence is that of Arabinose import ATP-binding protein AraG from Pseudomonas syringae pv. syringae (strain B728a).